The sequence spans 174 residues: Ubiquinone biosynthesis accessory factor UbiT (174 aa).

Residues 45 to 133 form the SCP2 domain; that stretch reads LDDGELEFLE…LGLYVKNLMD (89 aa).

It belongs to the UbiT family.

The protein operates within cofactor biosynthesis; ubiquinone biosynthesis. Required for O(2)-independent ubiquinone (coenzyme Q) biosynthesis. Likely functions as an accessory factor. In Escherichia coli O157:H7, this protein is Ubiquinone biosynthesis accessory factor UbiT.